A 311-amino-acid polypeptide reads, in one-letter code: Phospho-N-acetylmuramoyl-pentapeptide-transferase (311 aa).

The next 10 helical transmembrane spans lie at 2 to 22, 48 to 68, 74 to 94, 104 to 124, 144 to 164, 168 to 188, 192 to 212, 214 to 234, 237 to 257, and 288 to 308; these read ENNVIVFFLSFLSSVVFIEGF, GTPTAAGLVFIPIFIAVLLNF, SFLIAFSALSYGLIGAIDDFM, ITAVQKLFMQFTAAFIIVYFI, LGWFYYLLSSVVIVGVSNAVN, GVDGLAGFVFIGSIVPLLIVG, VVYLSLIGLLMGFLWHNWHPA, IFMGDAGSLALGGILATSFAL, LELFLIFFGFIFLLETLSVII, and KIAFRFSTLALLVSLLGIIGW.

It belongs to the glycosyltransferase 4 family. MraY subfamily. The cofactor is Mg(2+).

It is found in the cell inner membrane. The catalysed reaction is UDP-N-acetyl-alpha-D-muramoyl-L-alanyl-gamma-D-glutamyl-meso-2,6-diaminopimeloyl-D-alanyl-D-alanine + di-trans,octa-cis-undecaprenyl phosphate = di-trans,octa-cis-undecaprenyl diphospho-N-acetyl-alpha-D-muramoyl-L-alanyl-D-glutamyl-meso-2,6-diaminopimeloyl-D-alanyl-D-alanine + UMP. It functions in the pathway cell wall biogenesis; peptidoglycan biosynthesis. Functionally, catalyzes the initial step of the lipid cycle reactions in the biosynthesis of the cell wall peptidoglycan: transfers peptidoglycan precursor phospho-MurNAc-pentapeptide from UDP-MurNAc-pentapeptide onto the lipid carrier undecaprenyl phosphate, yielding undecaprenyl-pyrophosphoryl-MurNAc-pentapeptide, known as lipid I. The chain is Phospho-N-acetylmuramoyl-pentapeptide-transferase from Kosmotoga olearia (strain ATCC BAA-1733 / DSM 21960 / TBF 19.5.1).